Here is a 103-residue protein sequence, read N- to C-terminus: Small ribosomal subunit protein uS10 (103 aa).

The protein belongs to the universal ribosomal protein uS10 family. In terms of assembly, part of the 30S ribosomal subunit.

Involved in the binding of tRNA to the ribosomes. This is Small ribosomal subunit protein uS10 from Neisseria gonorrhoeae.